A 124-amino-acid polypeptide reads, in one-letter code: Small ribosomal subunit protein uS12 (124 aa).

Asp89 carries the post-translational modification 3-methylthioaspartic acid.

Belongs to the universal ribosomal protein uS12 family. In terms of assembly, part of the 30S ribosomal subunit. Contacts proteins S8 and S17. May interact with IF1 in the 30S initiation complex.

Its function is as follows. With S4 and S5 plays an important role in translational accuracy. Interacts with and stabilizes bases of the 16S rRNA that are involved in tRNA selection in the A site and with the mRNA backbone. Located at the interface of the 30S and 50S subunits, it traverses the body of the 30S subunit contacting proteins on the other side and probably holding the rRNA structure together. The combined cluster of proteins S8, S12 and S17 appears to hold together the shoulder and platform of the 30S subunit. This chain is Small ribosomal subunit protein uS12, found in Vibrio cholerae serotype O1 (strain ATCC 39315 / El Tor Inaba N16961).